Here is a 539-residue protein sequence, read N- to C-terminus: Chaperonin GroEL (539 aa).

ATP is bound by residues 30 to 33 (TLGP), K51, 87 to 91 (DGTTT), G415, 479 to 481 (NAA), and D495.

Belongs to the chaperonin (HSP60) family. As to quaternary structure, forms a cylinder of 14 subunits composed of two heptameric rings stacked back-to-back. Interacts with the co-chaperonin GroES.

The protein localises to the cytoplasm. The enzyme catalyses ATP + H2O + a folded polypeptide = ADP + phosphate + an unfolded polypeptide.. Together with its co-chaperonin GroES, plays an essential role in assisting protein folding. The GroEL-GroES system forms a nano-cage that allows encapsulation of the non-native substrate proteins and provides a physical environment optimized to promote and accelerate protein folding. The protein is Chaperonin GroEL of Enterobacter asburiae.